A 153-amino-acid polypeptide reads, in one-letter code: Regulatory protein RecX (153 aa).

It belongs to the RecX family.

The protein localises to the cytoplasm. Functionally, modulates RecA activity. This chain is Regulatory protein RecX, found in Syntrophotalea carbinolica (strain DSM 2380 / NBRC 103641 / GraBd1) (Pelobacter carbinolicus).